Reading from the N-terminus, the 311-residue chain is Lipoyl synthase (311 aa).

7 residues coordinate [4Fe-4S] cluster: cysteine 55, cysteine 60, cysteine 66, cysteine 81, cysteine 85, cysteine 88, and serine 292. Positions 67 to 281 (WEDREATFLI…ARFAEGLGFA (215 aa)) constitute a Radical SAM core domain.

The protein belongs to the radical SAM superfamily. Lipoyl synthase family. [4Fe-4S] cluster is required as a cofactor.

The protein resides in the cytoplasm. The enzyme catalyses [[Fe-S] cluster scaffold protein carrying a second [4Fe-4S](2+) cluster] + N(6)-octanoyl-L-lysyl-[protein] + 2 oxidized [2Fe-2S]-[ferredoxin] + 2 S-adenosyl-L-methionine + 4 H(+) = [[Fe-S] cluster scaffold protein] + N(6)-[(R)-dihydrolipoyl]-L-lysyl-[protein] + 4 Fe(3+) + 2 hydrogen sulfide + 2 5'-deoxyadenosine + 2 L-methionine + 2 reduced [2Fe-2S]-[ferredoxin]. It functions in the pathway protein modification; protein lipoylation via endogenous pathway; protein N(6)-(lipoyl)lysine from octanoyl-[acyl-carrier-protein]: step 2/2. Its function is as follows. Catalyzes the radical-mediated insertion of two sulfur atoms into the C-6 and C-8 positions of the octanoyl moiety bound to the lipoyl domains of lipoate-dependent enzymes, thereby converting the octanoylated domains into lipoylated derivatives. The chain is Lipoyl synthase from Mycobacterium bovis (strain ATCC BAA-935 / AF2122/97).